The following is a 322-amino-acid chain: Mycothiol acetyltransferase (322 aa).

2 consecutive N-acetyltransferase domains span residues 5–150 and 160–322; these read SWLR…DPDD and VTIR…PARG. Residue glutamate 36 participates in 1D-myo-inositol 2-(L-cysteinylamino)-2-deoxy-alpha-D-glucopyranoside binding. Acetyl-CoA is bound by residues 79-81 and 87-92; these read LVV and RRGVGT. Residues glutamate 187, lysine 226, and glutamate 252 each contribute to the 1D-myo-inositol 2-(L-cysteinylamino)-2-deoxy-alpha-D-glucopyranoside site. Acetyl-CoA is bound at residue 256 to 258; it reads VGV. Residue tyrosine 290 participates in 1D-myo-inositol 2-(L-cysteinylamino)-2-deoxy-alpha-D-glucopyranoside binding. 295–300 contacts acetyl-CoA; that stretch reads NARAVR.

This sequence belongs to the acetyltransferase family. MshD subfamily. In terms of assembly, monomer.

The catalysed reaction is 1D-myo-inositol 2-(L-cysteinylamino)-2-deoxy-alpha-D-glucopyranoside + acetyl-CoA = mycothiol + CoA + H(+). Its function is as follows. Catalyzes the transfer of acetyl from acetyl-CoA to desacetylmycothiol (Cys-GlcN-Ins) to form mycothiol. This Parafrankia sp. (strain EAN1pec) protein is Mycothiol acetyltransferase.